Here is a 407-residue protein sequence, read N- to C-terminus: MAYQEPNKDGFYGKFGGRFVPETLMTAVLELEKAYRESQADPSFQEELNQLLRQYVGRETPLYYAKNLTQHIGGAKIYLKREDLNHTGAHKINNALGQVWLAKRMGKKKIIAETGAGQHGVATATAAALFNMECTIHMGEEDVKRQALNVFRMELLGAKVEAVTDGSRVLKDAVNAALRSWVANIDDTHYILGSALGPHPFPEIVRDFQSVIGREAKQQYRDLTGQNLPDALVACVGGGSNAIGLFHPFVEDESVAMYGAEAAGLGVDTEHHAATLTKGRPGVLHGSLMDVLQDAHGQILEAFSISAGLDYPGIGPEHSHYHDIKRASYVPVTDEEALEGFQLLSRVEGIIPALESSHAIAFAVKLAKELGPEKSMIVCLSGRGDKDVVQVKDRLEADAAKKGEAHA.

An N6-(pyridoxal phosphate)lysine modification is found at K91.

Belongs to the TrpB family. As to quaternary structure, tetramer of two alpha and two beta chains. Requires pyridoxal 5'-phosphate as cofactor.

It carries out the reaction (1S,2R)-1-C-(indol-3-yl)glycerol 3-phosphate + L-serine = D-glyceraldehyde 3-phosphate + L-tryptophan + H2O. It participates in amino-acid biosynthesis; L-tryptophan biosynthesis; L-tryptophan from chorismate: step 5/5. Functionally, the beta subunit is responsible for the synthesis of L-tryptophan from indole and L-serine. The sequence is that of Tryptophan synthase beta chain from Streptococcus pneumoniae (strain JJA).